A 265-amino-acid polypeptide reads, in one-letter code: Probable S-methyl-5'-thioinosine phosphorylase (265 aa).

Residues S15 and 55–56 (RH) contribute to the phosphate site. M187 contacts substrate. T188 lines the phosphate pocket. Residue 211–213 (NYA) participates in substrate binding.

It belongs to the PNP/MTAP phosphorylase family. MTAP subfamily. In terms of assembly, homotrimer.

It catalyses the reaction S-methyl-5'-thioinosine + phosphate = 5-(methylsulfanyl)-alpha-D-ribose 1-phosphate + hypoxanthine. The protein operates within purine metabolism; purine nucleoside salvage. Functionally, catalyzes the reversible phosphorylation of S-methyl-5'-thioinosine (MTI) to hypoxanthine and 5-methylthioribose-1-phosphate. Involved in the breakdown of S-methyl-5'-thioadenosine (MTA), a major by-product of polyamine biosynthesis. Catabolism of (MTA) occurs via deamination to MTI and phosphorolysis to hypoxanthine. The chain is Probable S-methyl-5'-thioinosine phosphorylase from Thermodesulfovibrio yellowstonii (strain ATCC 51303 / DSM 11347 / YP87).